A 374-amino-acid chain; its full sequence is Pectate lyase 1 (374 aa).

The N-terminal stretch at 1–22 (MKYLLPSAAAGLLLLAAQPTMA) is a signal peptide. C93 and C176 are oxidised to a cystine. The Ca(2+) site is built by D150, D152, E187, and D191. The active site involves R239. C350 and C373 are disulfide-bonded.

It belongs to the polysaccharide lyase 1 family. PLADES subfamily. It depends on Ca(2+) as a cofactor.

The protein resides in the secreted. It catalyses the reaction Eliminative cleavage of (1-&gt;4)-alpha-D-galacturonan to give oligosaccharides with 4-deoxy-alpha-D-galact-4-enuronosyl groups at their non-reducing ends.. Its pathway is glycan metabolism; pectin degradation; 2-dehydro-3-deoxy-D-gluconate from pectin: step 2/5. Functionally, involved in maceration and soft-rotting of plant tissue. The protein is Pectate lyase 1 (pel1) of Pectobacterium carotovorum (Erwinia carotovora).